Reading from the N-terminus, the 307-residue chain is Oxygen-dependent coproporphyrinogen-III oxidase (307 aa).

Ser-99 lines the substrate pocket. The a divalent metal cation site is built by His-103 and His-113. The active-site Proton donor is the His-113. Substrate is bound at residue 115–117 (NVR). 2 residues coordinate a divalent metal cation: His-152 and His-182. The interval 247-282 (YVEFNLVFDRGTLFGLQSGGRTESILMSMPPVANWR) is important for dimerization. Substrate is bound at residue 265–267 (GGR).

Belongs to the aerobic coproporphyrinogen-III oxidase family. Homodimer. A divalent metal cation serves as cofactor.

The protein resides in the cytoplasm. It catalyses the reaction coproporphyrinogen III + O2 + 2 H(+) = protoporphyrinogen IX + 2 CO2 + 2 H2O. The protein operates within porphyrin-containing compound metabolism; protoporphyrin-IX biosynthesis; protoporphyrinogen-IX from coproporphyrinogen-III (O2 route): step 1/1. Its function is as follows. Involved in the heme biosynthesis. Catalyzes the aerobic oxidative decarboxylation of propionate groups of rings A and B of coproporphyrinogen-III to yield the vinyl groups in protoporphyrinogen-IX. This Burkholderia cenocepacia (strain ATCC BAA-245 / DSM 16553 / LMG 16656 / NCTC 13227 / J2315 / CF5610) (Burkholderia cepacia (strain J2315)) protein is Oxygen-dependent coproporphyrinogen-III oxidase.